Here is a 204-residue protein sequence, read N- to C-terminus: Methylthioribulose-1-phosphate dehydratase (204 aa).

Residues histidine 94 and histidine 96 each contribute to the Zn(2+) site.

Belongs to the aldolase class II family. MtnB subfamily. The cofactor is Zn(2+).

The enzyme catalyses 5-(methylsulfanyl)-D-ribulose 1-phosphate = 5-methylsulfanyl-2,3-dioxopentyl phosphate + H2O. It functions in the pathway amino-acid biosynthesis; L-methionine biosynthesis via salvage pathway; L-methionine from S-methyl-5-thio-alpha-D-ribose 1-phosphate: step 2/6. Catalyzes the dehydration of methylthioribulose-1-phosphate (MTRu-1-P) into 2,3-diketo-5-methylthiopentyl-1-phosphate (DK-MTP-1-P). This chain is Methylthioribulose-1-phosphate dehydratase, found in Citrobacter koseri (strain ATCC BAA-895 / CDC 4225-83 / SGSC4696).